A 420-amino-acid chain; its full sequence is MSGDTCVQTWPCSYYLELEKRWVPGRLSLTSLSLKFMTDKTRETLVSFPLSSIIEIKKEASHFIFSSITILERDHSKHWFSSLQPSRNAVFSVIEHFWRELLLSESGAAAEAASSSMTKGKELTCLMACTQKRLEDTARVLHHQGEQLDGISRGLDKMESDLDVADRLLTELESPSWWPFSSKLWKTPSETKPKWDASMADSKAFGKEGIVIQVPAVISQRTESHVKPGRLTVLVSGLEIYNSDSLLMHRFEREDVDDIKVHTPYEISICQRFIGKPDISYRLISAKMPEVIPILEVQFSKKIELLEVAMMLGSTRTSSLAEKGYSVWHAASGLMDQATHCEPSSGSQEGRPLQLQTSEPVISEEDTQELGQILRKLKGLALDTETELERQDEALDGITEAVDRATLTIDKHNRRMKKLT.

T-SNARE coiled-coil homology domains lie at 110–172 (AEAA…LTEL) and 357–419 (TSEP…MKKL). The disordered stretch occupies residues 338-357 (ATHCEPSSGSQEGRPLQLQT). The span at 342–357 (EPSSGSQEGRPLQLQT) shows a compositional bias: polar residues.

Belongs to the SVAP1 family. As to quaternary structure, forms a complex containing SNAP47, VAMP2 and STX1A. Associates with the BLOC-1 complex. Interacts with BLOC1S6.

The protein localises to the endomembrane system. Its subcellular location is the cytoplasm. The protein resides in the perinuclear region. May play a role in intracellular membrane fusion. The chain is Synaptosomal-associated protein 47 (SNAP47) from Bos taurus (Bovine).